We begin with the raw amino-acid sequence, 666 residues long: Vicilin-like antimicrobial peptides 2-2 (666 aa).

The N-terminal stretch at 1–27 is a signal peptide; it reads MAINTSNLCSLLFLLSLFLLSTTVSLA. Disordered stretches follow at residues 161–191 and 221–251; these read QQKR…DPQQ and RQHG…SDNP. The segment covering 239-251 has biased composition (basic and acidic residues); the sequence is RYEEGEEKQSDNP. Cupin type-1 domains lie at 271–410 and 455–625; these read SVLE…ERLR and YNLF…KEVE.

It belongs to the 7S seed storage protein family.

The protein resides in the secreted. Antimicrobial peptides 2b, 2c and 2d have antibacterial and antifungal activity against a range of species. In Macadamia integrifolia (Macadamia nut), this protein is Vicilin-like antimicrobial peptides 2-2.